Reading from the N-terminus, the 494-residue chain is Alpha-amylase 2 (494 aa).

The first 18 residues, 1–18 (MFLAKSIVCLALLAVANA), serve as a signal peptide directing secretion. Residues Cys-46 and Cys-102 are joined by a disulfide bond. 3 residues coordinate Ca(2+): Asn-116, Arg-165, and Asp-174. Cys-153 and Cys-167 are joined by a disulfide. Chloride is bound at residue Arg-202. Residue Asp-204 is the Nucleophile of the active site. Ca(2+) is bound at residue His-208. The Proton donor role is filled by Glu-241. Residues Asn-304 and Arg-343 each coordinate chloride. The tract at residues 350-370 (FTDTDQGPPTTDGQNIASPSF) is disordered. The span at 351 to 363 (TDTDQGPPTTDGQ) shows a compositional bias: low complexity. Intrachain disulfides connect Cys-376–Cys-382 and Cys-448–Cys-460.

The protein belongs to the glycosyl hydrolase 13 family. As to quaternary structure, monomer. The cofactor is Ca(2+). Chloride is required as a cofactor.

It carries out the reaction Endohydrolysis of (1-&gt;4)-alpha-D-glucosidic linkages in polysaccharides containing three or more (1-&gt;4)-alpha-linked D-glucose units.. The protein is Alpha-amylase 2 (Amy58) of Drosophila ananassae (Fruit fly).